Reading from the N-terminus, the 303-residue chain is Enoyl-CoA hydratase domain-containing protein 3, mitochondrial (303 aa).

A mitochondrion-targeting transit peptide spans 1 to 17 (MAAVAVLRAFGASGPMC). Residue lysine 110 is modified to N6-succinyllysine.

It belongs to the enoyl-CoA hydratase/isomerase family. In terms of tissue distribution, expressed in adipocytes. Expressed in blood cells, with higher expression in patients with low coronary lesions.

Its subcellular location is the mitochondrion. Functionally, may play a role in fatty acid biosynthesis and insulin sensitivity. The protein is Enoyl-CoA hydratase domain-containing protein 3, mitochondrial of Homo sapiens (Human).